A 368-amino-acid chain; its full sequence is Carbamoyl phosphate synthase small chain (368 aa).

Residues 1-178 (MKAVLGLEDG…GAECAWKGSG (178 aa)) are CPSase. L-glutamine is bound by residues serine 45, glycine 230, and glycine 232. The region spanning 182–368 (HAVVVDLGIK…KVVKVLGGDL (187 aa)) is the Glutamine amidotransferase type-1 domain. The Nucleophile role is filled by cysteine 257. L-glutamine contacts are provided by phenylalanine 258, glutamine 261, asparagine 299, glycine 301, and tyrosine 302. Residues histidine 342 and glutamate 344 contribute to the active site.

Belongs to the CarA family. As to quaternary structure, composed of two chains; the small (or glutamine) chain promotes the hydrolysis of glutamine to ammonia, which is used by the large (or ammonia) chain to synthesize carbamoyl phosphate. Tetramer of heterodimers (alpha,beta)4.

It carries out the reaction hydrogencarbonate + L-glutamine + 2 ATP + H2O = carbamoyl phosphate + L-glutamate + 2 ADP + phosphate + 2 H(+). The catalysed reaction is L-glutamine + H2O = L-glutamate + NH4(+). It participates in amino-acid biosynthesis; L-arginine biosynthesis; carbamoyl phosphate from bicarbonate: step 1/1. It functions in the pathway pyrimidine metabolism; UMP biosynthesis via de novo pathway; (S)-dihydroorotate from bicarbonate: step 1/3. In terms of biological role, small subunit of the glutamine-dependent carbamoyl phosphate synthetase (CPSase). CPSase catalyzes the formation of carbamoyl phosphate from the ammonia moiety of glutamine, carbonate, and phosphate donated by ATP, constituting the first step of 2 biosynthetic pathways, one leading to arginine and/or urea and the other to pyrimidine nucleotides. The small subunit (glutamine amidotransferase) binds and cleaves glutamine to supply the large subunit with the substrate ammonia. The chain is Carbamoyl phosphate synthase small chain from Methanosarcina acetivorans (strain ATCC 35395 / DSM 2834 / JCM 12185 / C2A).